A 177-amino-acid chain; its full sequence is Austinoid biosynthesis clusters protein F (177 aa).

It belongs to the trt14 isomerase family. As to quaternary structure, homodimer.

The protein operates within secondary metabolite biosynthesis; terpenoid biosynthesis. Part of the gene cluster B that mediates the biosynthesis of austinol and dehydroaustinol, two fungal meroterpenoids. The first step of the pathway is the synthesis of 3,5-dimethylorsellinic acid by the polyketide synthase ausA. 3,5-dimethylorsellinic acid is then prenylated by the polyprenyl transferase ausN. Further epoxidation by the FAD-dependent monooxygenase ausM and cyclization by the probable terpene cyclase ausL lead to the formation of protoaustinoid A. Protoaustinoid A is then oxidized to spiro-lactone preaustinoid A3 by the combined action of the FAD-binding monooxygenases ausB and ausC, and the dioxygenase ausE. Acid-catalyzed keto-rearrangement and ring contraction of the tetraketide portion of preaustinoid A3 by ausJ lead to the formation of preaustinoid A4. The aldo-keto reductase ausK, with the help of ausH, is involved in the next step by transforming preaustinoid A4 into isoaustinone which is in turn hydroxylated by the P450 monooxygenase ausI to form austinolide. Finally, the cytochrome P450 monooxygenase ausG modifies austinolide to austinol. Austinol can be further modified to dehydroaustinol which forms a diffusible complex with diorcinol that initiates conidiation. Due to genetic rearrangements of the clusters and the subsequent loss of some enzymes, the end products of the Emericella nidulans austinoid biosynthesis clusters are austinol and dehydroaustinol, even if additional enzymes, such as the O-acetyltransferase ausQ and the cytochrome P450 monooxygenase ausR are still functional. The polypeptide is Austinoid biosynthesis clusters protein F (Emericella nidulans (strain FGSC A4 / ATCC 38163 / CBS 112.46 / NRRL 194 / M139) (Aspergillus nidulans)).